A 270-amino-acid polypeptide reads, in one-letter code: Bis(5'-nucleosyl)-tetraphosphatase, symmetrical (270 aa).

It belongs to the Ap4A hydrolase family.

It catalyses the reaction P(1),P(4)-bis(5'-adenosyl) tetraphosphate + H2O = 2 ADP + 2 H(+). Hydrolyzes diadenosine 5',5'''-P1,P4-tetraphosphate to yield ADP. This chain is Bis(5'-nucleosyl)-tetraphosphatase, symmetrical, found in Haemophilus ducreyi (strain 35000HP / ATCC 700724).